The sequence spans 312 residues: Elongation factor Ts (312 aa).

The segment at 84-87 (TDFV) is involved in Mg(2+) ion dislocation from EF-Tu.

The protein belongs to the EF-Ts family.

Its subcellular location is the cytoplasm. In terms of biological role, associates with the EF-Tu.GDP complex and induces the exchange of GDP to GTP. It remains bound to the aminoacyl-tRNA.EF-Tu.GTP complex up to the GTP hydrolysis stage on the ribosome. This Caulobacter vibrioides (strain ATCC 19089 / CIP 103742 / CB 15) (Caulobacter crescentus) protein is Elongation factor Ts.